A 218-amino-acid chain; its full sequence is Hypoxanthine-guanine phosphoribosyltransferase (218 aa).

Position 2 is an N-acetylalanine (A2). K69 lines the GMP pocket. Position 103 is an N6-acetyllysine (K103). K115 is covalently cross-linked (Glycyl lysine isopeptide (Lys-Gly) (interchain with G-Cter in SUMO1); alternate). A Glycyl lysine isopeptide (Lys-Gly) (interchain with G-Cter in SUMO2); alternate cross-link involves residue K115. GMP is bound by residues 134 to 142 (EDIIDTGKT), K166, 186 to 188 (KFV), and D194. The active-site Proton acceptor is D138. At T142 the chain carries Phosphothreonine. D194 serves as a coordination point for Mg(2+).

This sequence belongs to the purine/pyrimidine phosphoribosyltransferase family. Homotetramer. Mg(2+) is required as a cofactor.

The protein resides in the cytoplasm. The catalysed reaction is IMP + diphosphate = hypoxanthine + 5-phospho-alpha-D-ribose 1-diphosphate. It catalyses the reaction GMP + diphosphate = guanine + 5-phospho-alpha-D-ribose 1-diphosphate. Its pathway is purine metabolism; IMP biosynthesis via salvage pathway; IMP from hypoxanthine: step 1/1. In terms of biological role, converts guanine to guanosine monophosphate, and hypoxanthine to inosine monophosphate. Transfers the 5-phosphoribosyl group from 5-phosphoribosylpyrophosphate onto the purine. Plays a central role in the generation of purine nucleotides through the purine salvage pathway. This chain is Hypoxanthine-guanine phosphoribosyltransferase (HPRT1), found in Sus scrofa (Pig).